The sequence spans 50 residues: Protein hunchback (50 aa).

C2H2-type zinc fingers lie at residues 1 to 5 (HIRNH), 11 to 33 (FKCNKCSYSCVNKSMLNSHLKSH), and 39 to 50 (YRCADCAYATKY).

It belongs to the hunchback C2H2-type zinc-finger protein family.

It is found in the nucleus. Gap class segmentation protein that controls development of head structures. The protein is Protein hunchback (hb) of Schultesia lampyridiformis (Firefly mimic roach).